The following is a 537-amino-acid chain: Inositol phosphorylceramide glucuronosyltransferase 1 (537 aa).

The chain crosses the membrane as a helical span at residues 6 to 26; the sequence is TSLWVLLLALVSIQLNGSFGS. D124 and D126 together coordinate Mn(2+). Substrate contacts are provided by residues 124 to 126, 153 to 155, 180 to 184, and 248 to 255; these read DAD, NSG, TGGDQ, and HYTLGPLK. H248 provides a ligand contact to Mn(2+). A run of 5 helical transmembrane segments spans residues 293 to 313, 375 to 395, 406 to 426, 468 to 488, and 494 to 514; these read DELV…FCIY, VSVV…FAIV, VLVY…FLLF, MAFL…TALF, and MVGL…HLAV.

It belongs to the glycosyltransferase 8 family. Glycogenin subfamily. Mn(2+) serves as cofactor. In terms of tissue distribution, expressed in seedlings, roots, leaves, stems and siliques.

It is found in the golgi apparatus membrane. It carries out the reaction glucuronate acceptor + UDP-alpha-D-glucuronate = acceptor beta-D-glucuronoside + UDP + H(+). The enzyme catalyses a 1D-myo-inositol-1-phospho-N-[(R)-2-hydroxy-very-long-chain fatty acyl]-(R)-4-hydroxysphingoid base + UDP-alpha-D-glucuronate = an alpha-D-glucuronosyl-(1&lt;-&gt;6)-1D-myo-inositol-1-phospho-N-[(R)-2-hydroxy-very-long-chain fatty acyl]-(R)-4-hydroxysphingoid base + UDP + H(+). It functions in the pathway sphingolipid metabolism. Its function is as follows. Mediates the transfer of glucuronic acid (GlcA) from UDP-GlcA to glycosyl inositol phosphorylceramides (GIPCs). The formation of GIPCs sphingolipids is essential for pollen function, plant growth and defense. Required for global fitness. In Arabidopsis thaliana (Mouse-ear cress), this protein is Inositol phosphorylceramide glucuronosyltransferase 1.